The sequence spans 457 residues: Argininosuccinate lyase (457 aa).

This sequence belongs to the lyase 1 family. Argininosuccinate lyase subfamily.

Its subcellular location is the cytoplasm. It catalyses the reaction 2-(N(omega)-L-arginino)succinate = fumarate + L-arginine. It functions in the pathway amino-acid biosynthesis; L-arginine biosynthesis; L-arginine from L-ornithine and carbamoyl phosphate: step 3/3. The protein is Argininosuccinate lyase of Salmonella arizonae (strain ATCC BAA-731 / CDC346-86 / RSK2980).